The following is a 317-amino-acid chain: Glutathione synthetase (317 aa).

Residues 125-311 enclose the ATP-grasp domain; that stretch reads EKMFATLFPQ…IGGKLMDAID (187 aa). ATP is bound at residue 152-208; it reads TAKHADVILKPLDGMGGTSIFRHRAGDPNLSVILETLTALGTQQIMAQAYLPAIKDG. The Mg(2+) site is built by glutamate 282 and asparagine 284.

The protein belongs to the prokaryotic GSH synthase family. The cofactor is Mg(2+). Requires Mn(2+) as cofactor.

It carries out the reaction gamma-L-glutamyl-L-cysteine + glycine + ATP = glutathione + ADP + phosphate + H(+). It functions in the pathway sulfur metabolism; glutathione biosynthesis; glutathione from L-cysteine and L-glutamate: step 2/2. The protein is Glutathione synthetase of Pseudomonas putida (strain ATCC 47054 / DSM 6125 / CFBP 8728 / NCIMB 11950 / KT2440).